A 412-amino-acid polypeptide reads, in one-letter code: Alanyl-tRNA editing protein Aarsd1 (412 aa).

Residues His-108, His-112, Cys-208, and His-212 each coordinate Zn(2+).

Belongs to the class-II aminoacyl-tRNA synthetase family. Alax-L subfamily. Zn(2+) serves as cofactor.

The protein resides in the cytoplasm. In terms of biological role, functions in trans to edit the amino acid moiety from incorrectly charged tRNA(Ala). The sequence is that of Alanyl-tRNA editing protein Aarsd1 (aarsd1) from Danio rerio (Zebrafish).